We begin with the raw amino-acid sequence, 120 residues long: NAD(P)H-quinone oxidoreductase subunit 3, chloroplastic (120 aa).

Transmembrane regions (helical) follow at residues 9–29 (IFWAFLIISSLIPILAFLISG), 64–84 (MFALVFVVFDVETVFLYPWAM), and 88–108 (VLGVSVFIEALIFVLILIVGL).

Belongs to the complex I subunit 3 family. NDH is composed of at least 16 different subunits, 5 of which are encoded in the nucleus.

The protein localises to the plastid. It localises to the chloroplast thylakoid membrane. The enzyme catalyses a plastoquinone + NADH + (n+1) H(+)(in) = a plastoquinol + NAD(+) + n H(+)(out). The catalysed reaction is a plastoquinone + NADPH + (n+1) H(+)(in) = a plastoquinol + NADP(+) + n H(+)(out). NDH shuttles electrons from NAD(P)H:plastoquinone, via FMN and iron-sulfur (Fe-S) centers, to quinones in the photosynthetic chain and possibly in a chloroplast respiratory chain. The immediate electron acceptor for the enzyme in this species is believed to be plastoquinone. Couples the redox reaction to proton translocation, and thus conserves the redox energy in a proton gradient. The sequence is that of NAD(P)H-quinone oxidoreductase subunit 3, chloroplastic from Lupinus luteus (European yellow lupine).